Consider the following 146-residue polypeptide: Probable glycine cleavage system H protein 3 (146 aa).

The Lipoyl-binding domain occupies 29–111 (VVSVGMTDLG…PYGSWIIKVS (83 aa)). Position 71 is an N6-lipoyllysine (Lys-71).

The protein belongs to the GcvH family. As to quaternary structure, the glycine cleavage system is composed of four proteins: P, T, L and H. Requires (R)-lipoate as cofactor.

The glycine cleavage system catalyzes the degradation of glycine. The H protein shuttles the methylamine group of glycine from the P protein to the T protein. In Sulfolobus acidocaldarius (strain ATCC 33909 / DSM 639 / JCM 8929 / NBRC 15157 / NCIMB 11770), this protein is Probable glycine cleavage system H protein 3.